The sequence spans 125 residues: uncharacterized protein (125 aa).

Residues 5-33 (NLTVEQLAAELTKLQMENSHLKRKLRRSV) are a coiled coil. 2 disordered regions span residues 22–50 (NSHL…TEPE) and 96–125 (FRLH…GQQQ). 2 stretches are compositionally biased toward basic and acidic residues: residues 39–50 (EPPKPRELTEPE) and 96–112 (FRLH…EKKL). Basic residues predominate over residues 113-125 (SKEKRRTARGQQQ).

Belongs to the herpesviridae BLRF2 family.

This is an uncharacterized protein from Connochaetes taurinus (Blue wildebeest).